The primary structure comprises 462 residues: Putative ABC transporter A445L (462 aa).

The protein belongs to the protein kinase superfamily. ADCK protein kinase family.

The protein is Putative ABC transporter A445L of Chlorella (PBCV-1).